A 351-amino-acid chain; its full sequence is Phospho-N-acetylmuramoyl-pentapeptide-transferase (351 aa).

A run of 10 helical transmembrane segments spans residues 17–37, 61–83, 88–105, 130–150, 158–178, 190–210, 230–250, 254–274, 279–299, and 328–348; these read TAYA…FIIS, MGIP…FFWI, IYFL…CLGF, ILFS…HVSI, SLKL…LISA, GLAI…AYLT, LVIF…FNAY, IMMG…VALI, ILFA…IIQV, and QVVI…LSTI.

It belongs to the glycosyltransferase 4 family. MraY subfamily. Requires Mg(2+) as cofactor.

Its subcellular location is the cell inner membrane. It carries out the reaction UDP-N-acetyl-alpha-D-muramoyl-L-alanyl-gamma-D-glutamyl-meso-2,6-diaminopimeloyl-D-alanyl-D-alanine + di-trans,octa-cis-undecaprenyl phosphate = di-trans,octa-cis-undecaprenyl diphospho-N-acetyl-alpha-D-muramoyl-L-alanyl-D-glutamyl-meso-2,6-diaminopimeloyl-D-alanyl-D-alanine + UMP. It functions in the pathway cell wall biogenesis; peptidoglycan biosynthesis. Catalyzes the initial step of the lipid cycle reactions in the biosynthesis of the cell wall peptidoglycan: transfers peptidoglycan precursor phospho-MurNAc-pentapeptide from UDP-MurNAc-pentapeptide onto the lipid carrier undecaprenyl phosphate, yielding undecaprenyl-pyrophosphoryl-MurNAc-pentapeptide, known as lipid I. The sequence is that of Phospho-N-acetylmuramoyl-pentapeptide-transferase from Borrelia recurrentis (strain A1).